A 376-amino-acid chain; its full sequence is Heptahelical transmembrane protein ADIPOR1 (376 aa).

Residues 1 to 90 lie on the Cytoplasmic side of the membrane; it reads MGEEAAMATM…LSLFSWHNET (90 aa). The tract at residues 20–46 is disordered; the sequence is PAAAPAPAKGGGSKKKRKQQKREEKRK. A helical membrane pass occupies residues 91-111; the sequence is INIWTHLLGFVLFFGLTVLHL. Over 112–179 the chain is Extracellular; that stretch reads GQYFPQVADL…AAAAATTRWP (68 aa). The chain crosses the membrane as a helical span at residues 180–200; the sequence is FFVFLAGAMFCLLSSAACHLL. The Cytoplasmic segment spans residues 201-216; sequence SCHSHRLNLFLIRLDY. A helical transmembrane segment spans residues 217-237; sequence TGIAVMIVVSFFPPIYYIFQC. Over 238-240 the chain is Extracellular; that stretch reads EPR. Residues 241 to 261 traverse the membrane as a helical segment; it reads WQVVYLSAITAAGVATVYALM. Topologically, residues 262–274 are cytoplasmic; it reads SPRLSAARYRAHR. Residues 275 to 295 form a helical membrane-spanning segment; that stretch reads ALLFVAMGLSGVVPAAHAVAV. Over 296-303 the chain is Extracellular; that stretch reads NWHEPRRN. A helical transmembrane segment spans residues 304-324; it reads VTLAYEGAMAASYLAGTAFYL. The Cytoplasmic portion of the chain corresponds to 325 to 344; the sequence is TRVPERWRPGMFDLCGHSHQ. The helical transmembrane segment at 345 to 365 threads the bilayer; it reads IFHALVIAGALAHYAAAIVFI. Over 366 to 376 the chain is Extracellular; sequence QARDEMGCPAP.

This sequence belongs to the ADIPOR family.

The protein resides in the membrane. In terms of biological role, may play a role in abiotic stress response. The chain is Heptahelical transmembrane protein ADIPOR1 (ADIPOR1) from Oryza sativa subsp. japonica (Rice).